Reading from the N-terminus, the 425-residue chain is GPI mannosyltransferase 1 (425 aa).

The next 9 membrane-spanning stretches (helical) occupy residues 11-31 (VIGASIALRAVLLVYGAWQDA), 85-105 (FFAFGKALFALADVVAGWLIA), 144-164 (LLGVLVVGLLWAVLSRRVSLA), 166-186 (VILGLGVHFKIYPFIYGPAVV), 233-253 (IHLTLVALATFSALNVSMYIL), 295-315 (FESLAFIPQLLLSVVVIPLVL), 340-360 (SQYFLWYLIFLPFYLPSSSLM), 367-387 (ILVGLLWVIAQALWLQQGYNL), and 398-418 (GLFLASLFFFAVNVWILGIIV).

This sequence belongs to the PIGM family.

It is found in the endoplasmic reticulum membrane. It functions in the pathway glycolipid biosynthesis; glycosylphosphatidylinositol-anchor biosynthesis. Mannosyltransferase involved in glycosylphosphatidylinositol-anchor biosynthesis. Transfers the first alpha-1,4-mannose to GlcN-acyl-PI during GPI precursor assembly. Required for cell wall integrity. This Aspergillus fumigatus (strain ATCC MYA-4609 / CBS 101355 / FGSC A1100 / Af293) (Neosartorya fumigata) protein is GPI mannosyltransferase 1 (gpi14).